The following is a 367-amino-acid chain: Alginate lyase (367 aa).

The N-terminal stretch at 1-24 (MTAFKRIFSPALLVLALYGGAAHA) is a signal peptide. Residues 63 to 64 (SK), 136 to 137 (HT), and Y254 each bind substrate.

The protein belongs to the polysaccharide lyase 5 family.

It is found in the periplasm. The enzyme catalyses Eliminative cleavage of alginate to give oligosaccharides with 4-deoxy-alpha-L-erythro-hex-4-enuronosyl groups at their non-reducing ends and beta-D-mannuronate at their reducing end.. In terms of biological role, catalyzes the depolymerization of alginate by cleaving the beta-1,4 glycosidic bond between two adjacent sugar residues via a beta-elimination mechanism. May serve to degrade mislocalized alginate that is trapped in the periplasmic space. This is Alginate lyase from Pseudomonas putida (strain W619).